Here is a 67-residue protein sequence, read N- to C-terminus: Large ribosomal subunit protein bL31 (67 aa).

Zn(2+)-binding residues include Cys-16, Cys-18, Cys-37, and Cys-40.

It belongs to the bacterial ribosomal protein bL31 family. Type A subfamily. Part of the 50S ribosomal subunit. It depends on Zn(2+) as a cofactor.

Functionally, binds the 23S rRNA. The polypeptide is Large ribosomal subunit protein bL31 (Methylococcus capsulatus (strain ATCC 33009 / NCIMB 11132 / Bath)).